Here is a 400-residue protein sequence, read N- to C-terminus: 3-phenylpropionate/cinnamic acid dioxygenase ferredoxin--NAD(+) reductase component (400 aa).

Residue 5-36 (TIIIVGGGQAAAMAAASLRQQGFTGELHLFSD) coordinates FAD. Position 146-174 (146-174 (SVVIVGAGTIGLELAASATQRGCKVTVIE)) interacts with NAD(+).

Belongs to the bacterial ring-hydroxylating dioxygenase ferredoxin reductase family. This dioxygenase system consists of four proteins: the two subunits of the hydroxylase component (HcaE and HcaF), a ferredoxin (HcaC) and a ferredoxin reductase (HcaD). Requires FAD as cofactor.

It carries out the reaction 2 reduced [2Fe-2S]-[ferredoxin] + NAD(+) + H(+) = 2 oxidized [2Fe-2S]-[ferredoxin] + NADH. It functions in the pathway aromatic compound metabolism; 3-phenylpropanoate degradation. In terms of biological role, part of the multicomponent 3-phenylpropionate dioxygenase, that converts 3-phenylpropionic acid (PP) and cinnamic acid (CI) into 3-phenylpropionate-dihydrodiol (PP-dihydrodiol) and cinnamic acid-dihydrodiol (CI-dihydrodiol), respectively. In Escherichia coli O17:K52:H18 (strain UMN026 / ExPEC), this protein is 3-phenylpropionate/cinnamic acid dioxygenase ferredoxin--NAD(+) reductase component.